The chain runs to 525 residues: GMP synthase [glutamine-hydrolyzing] (525 aa).

The Glutamine amidotransferase type-1 domain occupies 16–205 (PVLVVDFGAQ…LHDFAGIGAR (190 aa)). The active-site Nucleophile is the Cys-93. Active-site residues include His-179 and Glu-181. Residues 206–399 (WTPANIANAL…LGLPEEIVAR (194 aa)) form the GMPS ATP-PPase domain. Residue 233–239 (SGGVDSA) coordinates ATP.

As to quaternary structure, homodimer.

The enzyme catalyses XMP + L-glutamine + ATP + H2O = GMP + L-glutamate + AMP + diphosphate + 2 H(+). It participates in purine metabolism; GMP biosynthesis; GMP from XMP (L-Gln route): step 1/1. In terms of biological role, catalyzes the synthesis of GMP from XMP. The chain is GMP synthase [glutamine-hydrolyzing] from Mycobacterium marinum (strain ATCC BAA-535 / M).